Reading from the N-terminus, the 332-residue chain is Glyoxylate reductase (332 aa).

NADP(+)-binding positions include 155-158 and 236-238; these read MGRI and TSR. Active-site residues include Arg238 and Glu267. His286 acts as the Proton donor in catalysis. NADP(+) is bound at residue 286–288; that stretch reads HAA.

This sequence belongs to the D-isomer specific 2-hydroxyacid dehydrogenase family. GyaR subfamily. In terms of assembly, homodimer.

The protein localises to the cytoplasm. The catalysed reaction is glycolate + NAD(+) = glyoxylate + NADH + H(+). The protein is Glyoxylate reductase of Korarchaeum cryptofilum (strain OPF8).